The primary structure comprises 364 residues: Delta(7)-sterol 5(6)-desaturase (364 aa).

3 helical membrane-spanning segments follow: residues 94–114 (FFSLWAVVTVFGLLLYLITAS), 142–162 (LAVSAIPTMSLLTVPWFMLEL), and 181–201 (KLLIEYATFIFFTDCGIYLAH). Residues 188–312 (TFIFFTDCGI…FTTLWDRLGG (125 aa)) form the Fatty acid hydroxylase domain. The Histidine box-1 motif lies at 201-205 (HRWLH). Positions 214 to 218 (HKPHH) match the Histidine box-2 motif. Residues 249 to 269 (ILPLHKISYLILFTFVNFWSV) form a helical membrane-spanning segment. The Histidine box-3 signature appears at 289 to 293 (HTVHH).

This sequence belongs to the sterol desaturase family. Fe cation is required as a cofactor.

The protein resides in the endoplasmic reticulum membrane. The catalysed reaction is a Delta(7)-sterol + 2 Fe(II)-[cytochrome b5] + O2 + 2 H(+) = a Delta(5),Delta(7)-sterol + 2 Fe(III)-[cytochrome b5] + 2 H2O. It functions in the pathway steroid metabolism; ergosterol biosynthesis; ergosterol from zymosterol: step 3/5. Catalyzes the introduction of a C-5 double bond in the B ring of ergosterol. May contribute to the regulation of ergosterol biosynthesis. This is Delta(7)-sterol 5(6)-desaturase (ERG3) from Candida glabrata (strain ATCC 2001 / BCRC 20586 / JCM 3761 / NBRC 0622 / NRRL Y-65 / CBS 138) (Yeast).